Consider the following 673-residue polypeptide: UvrABC system protein B (673 aa).

The Helicase ATP-binding domain occupies 26–183; the sequence is EGLEDGLAHQ…RRLAELQYTR (158 aa). 39–46 contributes to the ATP binding site; it reads GVTGSGKT. Positions 92-115 match the Beta-hairpin motif; it reads YYDYYQPEAYVPSSDTFIEKDASV. In terms of domain architecture, Helicase C-terminal spans 431–597; the sequence is QVDDLLSEIR…GLNKKVVDIL (167 aa). Residues 633–668 form the UVR domain; sequence QQKIHELEGQMMQHAQNLEFEEAAQIRDQLHQLREL.

The protein belongs to the UvrB family. Forms a heterotetramer with UvrA during the search for lesions. Interacts with UvrC in an incision complex.

The protein localises to the cytoplasm. The UvrABC repair system catalyzes the recognition and processing of DNA lesions. A damage recognition complex composed of 2 UvrA and 2 UvrB subunits scans DNA for abnormalities. Upon binding of the UvrA(2)B(2) complex to a putative damaged site, the DNA wraps around one UvrB monomer. DNA wrap is dependent on ATP binding by UvrB and probably causes local melting of the DNA helix, facilitating insertion of UvrB beta-hairpin between the DNA strands. Then UvrB probes one DNA strand for the presence of a lesion. If a lesion is found the UvrA subunits dissociate and the UvrB-DNA preincision complex is formed. This complex is subsequently bound by UvrC and the second UvrB is released. If no lesion is found, the DNA wraps around the other UvrB subunit that will check the other stand for damage. The chain is UvrABC system protein B from Klebsiella pneumoniae (strain 342).